A 280-amino-acid polypeptide reads, in one-letter code: Proteasome subunit beta 2 (280 aa).

The propeptide at 1-52 is removed in mature form; by autocatalysis; it reads MTERERGQGLPAEFFAVGTASFVELLSRTAPQLLPVNRVRDGSHPMPDIPHG. Thr-53 acts as the Nucleophile in catalysis.

It belongs to the peptidase T1B family. As to quaternary structure, the 20S proteasome core is composed of 14 alpha and 14 beta subunits that assemble into four stacked heptameric rings, resulting in a barrel-shaped structure. The two inner rings, each composed of seven catalytic beta subunits, are sandwiched by two outer rings, each composed of seven alpha subunits. The catalytic chamber with the active sites is on the inside of the barrel. Has a gated structure, the ends of the cylinder being occluded by the N-termini of the alpha-subunits. Is capped by the proteasome-associated ATPase, ARC.

The protein resides in the cytoplasm. The enzyme catalyses Cleavage of peptide bonds with very broad specificity.. The protein operates within protein degradation; proteasomal Pup-dependent pathway. Its activity is regulated as follows. The formation of the proteasomal ATPase ARC-20S proteasome complex, likely via the docking of the C-termini of ARC into the intersubunit pockets in the alpha-rings, may trigger opening of the gate for substrate entry. Interconversion between the open-gate and close-gate conformations leads to a dynamic regulation of the 20S proteasome proteolysis activity. In terms of biological role, component of the proteasome core, a large protease complex with broad specificity involved in protein degradation. The protein is Proteasome subunit beta 2 of Thermomonospora curvata (strain ATCC 19995 / DSM 43183 / JCM 3096 / KCTC 9072 / NBRC 15933 / NCIMB 10081 / Henssen B9).